The primary structure comprises 228 residues: Cytochrome c oxidase subunit 2 (228 aa).

Residues 1 to 26 (MSQWFQLGLQNGNSPLMEQLIFFHDH) lie on the Mitochondrial intermembrane side of the membrane. The chain crosses the membrane as a helical span at residues 27 to 48 (ALLVVILITSLVGFFLAALFSN). Residues 49-62 (KFLHRYLLDGQAIE) are Mitochondrial matrix-facing. The helical transmembrane segment at 63–82 (TVWTVIPAIILVAIALPSIR) threads the bilayer. Residues 83-228 (LLYLIDEIHN…FLKWLELQIS (146 aa)) lie on the Mitochondrial intermembrane side of the membrane. The Cu cation site is built by His161, Cys196, Glu198, Cys200, His204, and Met207. A Mg(2+)-binding site is contributed by Glu198.

It belongs to the cytochrome c oxidase subunit 2 family. Component of the cytochrome c oxidase (complex IV, CIV), a multisubunit enzyme composed of a catalytic core of 3 subunits and several supernumerary subunits. The complex exists as a monomer or a dimer and forms supercomplexes (SCs) in the inner mitochondrial membrane with ubiquinol-cytochrome c oxidoreductase (cytochrome b-c1 complex, complex III, CIII). Cu cation serves as cofactor.

The protein localises to the mitochondrion inner membrane. The enzyme catalyses 4 Fe(II)-[cytochrome c] + O2 + 8 H(+)(in) = 4 Fe(III)-[cytochrome c] + 2 H2O + 4 H(+)(out). In terms of biological role, component of the cytochrome c oxidase, the last enzyme in the mitochondrial electron transport chain which drives oxidative phosphorylation. The respiratory chain contains 3 multisubunit complexes succinate dehydrogenase (complex II, CII), ubiquinol-cytochrome c oxidoreductase (cytochrome b-c1 complex, complex III, CIII) and cytochrome c oxidase (complex IV, CIV), that cooperate to transfer electrons derived from NADH and succinate to molecular oxygen, creating an electrochemical gradient over the inner membrane that drives transmembrane transport and the ATP synthase. Cytochrome c oxidase is the component of the respiratory chain that catalyzes the reduction of oxygen to water. Electrons originating from reduced cytochrome c in the intermembrane space (IMS) are transferred via the dinuclear copper A center (CU(A)) of subunit 2 and heme A of subunit 1 to the active site in subunit 1, a binuclear center (BNC) formed by heme A3 and copper B (CU(B)). The BNC reduces molecular oxygen to 2 water molecules using 4 electrons from cytochrome c in the IMS and 4 protons from the mitochondrial matrix. The polypeptide is Cytochrome c oxidase subunit 2 (COII) (Artemia franciscana (Brine shrimp)).